A 526-amino-acid chain; its full sequence is ATP synthase subunit alpha (526 aa).

171–178 (GDRQTGKT) provides a ligand contact to ATP.

Belongs to the ATPase alpha/beta chains family. F-type ATPases have 2 components, CF(1) - the catalytic core - and CF(0) - the membrane proton channel. CF(1) has five subunits: alpha(3), beta(3), gamma(1), delta(1), epsilon(1). CF(0) has four main subunits: a(1), b(1), b'(1) and c(9-12).

The protein resides in the cell inner membrane. It carries out the reaction ATP + H2O + 4 H(+)(in) = ADP + phosphate + 5 H(+)(out). In terms of biological role, produces ATP from ADP in the presence of a proton gradient across the membrane. The alpha chain is a regulatory subunit. In Chlorobaculum tepidum (strain ATCC 49652 / DSM 12025 / NBRC 103806 / TLS) (Chlorobium tepidum), this protein is ATP synthase subunit alpha.